A 339-amino-acid chain; its full sequence is Ketol-acid reductoisomerase (NADP(+)) (339 aa).

The KARI N-terminal Rossmann domain maps to 1 to 182 (MRVYYDRDAD…GGGRSGIIET (182 aa)). Residues 24-27 (YGSQ), R48, S51, S53, and 83-86 (DELQ) contribute to the NADP(+) site. The active site involves H108. G134 contacts NADP(+). The KARI C-terminal knotted domain occupies 183–328 (TFREECETDL…EKLRGMMPWI (146 aa)). Mg(2+)-binding residues include D191, E195, E227, and E231. Position 252 (S252) interacts with substrate.

The protein belongs to the ketol-acid reductoisomerase family. The cofactor is Mg(2+).

It catalyses the reaction (2R)-2,3-dihydroxy-3-methylbutanoate + NADP(+) = (2S)-2-acetolactate + NADPH + H(+). The enzyme catalyses (2R,3R)-2,3-dihydroxy-3-methylpentanoate + NADP(+) = (S)-2-ethyl-2-hydroxy-3-oxobutanoate + NADPH + H(+). It participates in amino-acid biosynthesis; L-isoleucine biosynthesis; L-isoleucine from 2-oxobutanoate: step 2/4. The protein operates within amino-acid biosynthesis; L-valine biosynthesis; L-valine from pyruvate: step 2/4. Its function is as follows. Involved in the biosynthesis of branched-chain amino acids (BCAA). Catalyzes an alkyl-migration followed by a ketol-acid reduction of (S)-2-acetolactate (S2AL) to yield (R)-2,3-dihydroxy-isovalerate. In the isomerase reaction, S2AL is rearranged via a Mg-dependent methyl migration to produce 3-hydroxy-3-methyl-2-ketobutyrate (HMKB). In the reductase reaction, this 2-ketoacid undergoes a metal-dependent reduction by NADPH to yield (R)-2,3-dihydroxy-isovalerate. This chain is Ketol-acid reductoisomerase (NADP(+)), found in Magnetospirillum molischianum (Rhodospirillum molischianum).